A 396-amino-acid chain; its full sequence is Adenosine deaminase 1 (396 aa).

A disordered region spans residues 1–26 (MTSRSTEKSAAANPAAVSKTPSPDRI). Positions 35 and 37 each coordinate Zn(2+). His-37, Asp-39, and Gly-197 together coordinate substrate. His-224 contributes to the Zn(2+) binding site. Residue Glu-227 is the Proton donor of the active site. Asp-316 is a Zn(2+) binding site.

It belongs to the metallo-dependent hydrolases superfamily. Adenosine and AMP deaminases family. Adenosine deaminase subfamily. Homotetramer. Zn(2+) is required as a cofactor.

The enzyme catalyses adenosine + H2O + H(+) = inosine + NH4(+). It catalyses the reaction 2'-deoxyadenosine + H2O + H(+) = 2'-deoxyinosine + NH4(+). With respect to regulation, coformycin and 2'-deoxycoformycin, whose structures mimic the transition state of the deamination reaction, are potent competitive inhibitors. Functionally, catalyzes the hydrolytic deamination of adenosine and 2-deoxyadenosine. The chain is Adenosine deaminase 1 from Streptomyces coelicolor (strain ATCC BAA-471 / A3(2) / M145).